Here is a 463-residue protein sequence, read N- to C-terminus: ATP-dependent protease ATPase subunit HslU (463 aa).

ATP contacts are provided by residues isoleucine 19 and 61-66 (GVGKTE). A disordered region spans residues 154-175 (FGGNQNSNQTSDAQEDDEIEKK). The span at 156–165 (GNQNSNQTSD) shows a compositional bias: polar residues. ATP contacts are provided by aspartate 277, glutamate 341, and arginine 413.

This sequence belongs to the ClpX chaperone family. HslU subfamily. A double ring-shaped homohexamer of HslV is capped on each side by a ring-shaped HslU homohexamer. The assembly of the HslU/HslV complex is dependent on binding of ATP.

The protein localises to the cytoplasm. In terms of biological role, ATPase subunit of a proteasome-like degradation complex; this subunit has chaperone activity. The binding of ATP and its subsequent hydrolysis by HslU are essential for unfolding of protein substrates subsequently hydrolyzed by HslV. HslU recognizes the N-terminal part of its protein substrates and unfolds these before they are guided to HslV for hydrolysis. The protein is ATP-dependent protease ATPase subunit HslU of Bacillus mycoides (strain KBAB4) (Bacillus weihenstephanensis).